Here is a 693-residue protein sequence, read N- to C-terminus: Putative adenosylcobalamin-dependent ribonucleoside-triphosphate reductase (693 aa).

An intrachain disulfide couples Cys-90 to Cys-386. Active-site residues include Cys-375 and Glu-377.

It belongs to the class II ribonucleoside-triphosphate reductase family. Adenosylcob(III)alamin serves as cofactor.

It catalyses the reaction a 2'-deoxyribonucleoside 5'-triphosphate + [thioredoxin]-disulfide + H2O = a ribonucleoside 5'-triphosphate + [thioredoxin]-dithiol. The chain is Putative adenosylcobalamin-dependent ribonucleoside-triphosphate reductase (50) from Mycobacterium phage D29 (Mycobacteriophage D29).